The primary structure comprises 256 residues: Thiazole synthase (256 aa).

Lysine 95 (schiff-base intermediate with DXP) is an active-site residue. 1-deoxy-D-xylulose 5-phosphate is bound by residues glycine 156, alanine 183–glycine 184, and asparagine 205–threonine 206.

Belongs to the ThiG family. As to quaternary structure, homotetramer. Forms heterodimers with either ThiH or ThiS.

Its subcellular location is the cytoplasm. The catalysed reaction is [ThiS sulfur-carrier protein]-C-terminal-Gly-aminoethanethioate + 2-iminoacetate + 1-deoxy-D-xylulose 5-phosphate = [ThiS sulfur-carrier protein]-C-terminal Gly-Gly + 2-[(2R,5Z)-2-carboxy-4-methylthiazol-5(2H)-ylidene]ethyl phosphate + 2 H2O + H(+). It participates in cofactor biosynthesis; thiamine diphosphate biosynthesis. Functionally, catalyzes the rearrangement of 1-deoxy-D-xylulose 5-phosphate (DXP) to produce the thiazole phosphate moiety of thiamine. Sulfur is provided by the thiocarboxylate moiety of the carrier protein ThiS. In vitro, sulfur can be provided by H(2)S. The protein is Thiazole synthase of Gluconacetobacter diazotrophicus (strain ATCC 49037 / DSM 5601 / CCUG 37298 / CIP 103539 / LMG 7603 / PAl5).